Reading from the N-terminus, the 410-residue chain is Argininosuccinate synthase (410 aa).

Residues 10-18 (AYSGGLDTS) and Ala-37 contribute to the ATP site. Positions 90 and 95 each coordinate L-citrulline. Gly-120 contacts ATP. L-aspartate-binding residues include Thr-122, Asn-126, and Asp-127. Asn-126 is a binding site for L-citrulline. Residues Arg-130, Ser-182, Ser-191, Glu-267, and Tyr-279 each coordinate L-citrulline.

Belongs to the argininosuccinate synthase family. Type 1 subfamily. As to quaternary structure, homotetramer.

It is found in the cytoplasm. It carries out the reaction L-citrulline + L-aspartate + ATP = 2-(N(omega)-L-arginino)succinate + AMP + diphosphate + H(+). The protein operates within amino-acid biosynthesis; L-arginine biosynthesis; L-arginine from L-ornithine and carbamoyl phosphate: step 2/3. The protein is Argininosuccinate synthase of Polynucleobacter asymbioticus (strain DSM 18221 / CIP 109841 / QLW-P1DMWA-1) (Polynucleobacter necessarius subsp. asymbioticus).